The chain runs to 225 residues: GTP:AMP phosphotransferase, mitochondrial (225 aa).

24–29 (GSGKGT) is a GTP binding site. The segment at 45–74 (SSGDILRQEIKSESTLGREATTYIAQGKLL) is NMP. AMP contacts are provided by residues S46, R51, 72-74 (KLL), 103-106 (GFPR), and Q110. An LID region spans residues 144–181 (NRYVHVPSGRVYNLQYNPPKVPGLDDITGEPLTKRLDD). GTP contacts are provided by residues R145 and 154-155 (VY). Residues R178 and R189 each coordinate AMP. S218 is a GTP binding site.

Belongs to the adenylate kinase family. AK3 subfamily. In terms of assembly, monomer.

The protein resides in the mitochondrion matrix. It carries out the reaction a ribonucleoside 5'-triphosphate + AMP = a ribonucleoside 5'-diphosphate + ADP. Its function is as follows. Involved in maintaining the homeostasis of cellular nucleotides by catalyzing the interconversion of nucleoside phosphates. Has GTP:AMP phosphotransferase and ITP:AMP phosphotransferase activities. Does not accept ATP as phosphate donor. This Saccharomyces cerevisiae (strain ATCC 204508 / S288c) (Baker's yeast) protein is GTP:AMP phosphotransferase, mitochondrial.